The sequence spans 536 residues: Phosphoenolpyruvate carboxykinase (ATP) (536 aa).

Arg61, Tyr195, and Lys201 together coordinate substrate. Residues Lys201, His220, and 236–244 (GLSGTGKTT) each bind ATP. The Mn(2+) site is built by Lys201 and His220. Asp257 is a binding site for Mn(2+). ATP is bound by residues Glu285, Arg322, and Thr447. Arg322 lines the substrate pocket.

Belongs to the phosphoenolpyruvate carboxykinase (ATP) family. It depends on Mn(2+) as a cofactor.

The protein localises to the cytoplasm. The enzyme catalyses oxaloacetate + ATP = phosphoenolpyruvate + ADP + CO2. Its pathway is carbohydrate biosynthesis; gluconeogenesis. Functionally, involved in the gluconeogenesis. Catalyzes the conversion of oxaloacetate (OAA) to phosphoenolpyruvate (PEP) through direct phosphoryl transfer between the nucleoside triphosphate and OAA. This Brucella suis biovar 1 (strain 1330) protein is Phosphoenolpyruvate carboxykinase (ATP).